The following is a 498-amino-acid chain: ATP synthase subunit beta, chloroplastic (498 aa).

An ATP-binding site is contributed by 172 to 179 (GGAGVGKT).

This sequence belongs to the ATPase alpha/beta chains family. F-type ATPases have 2 components, CF(1) - the catalytic core - and CF(0) - the membrane proton channel. CF(1) has five subunits: alpha(3), beta(3), gamma(1), delta(1), epsilon(1). CF(0) has four main subunits: a(1), b(1), b'(1) and c(9-12).

The protein localises to the plastid. Its subcellular location is the chloroplast thylakoid membrane. The catalysed reaction is ATP + H2O + 4 H(+)(in) = ADP + phosphate + 5 H(+)(out). Produces ATP from ADP in the presence of a proton gradient across the membrane. The catalytic sites are hosted primarily by the beta subunits. This Trochodendron aralioides (Wheel tree) protein is ATP synthase subunit beta, chloroplastic.